The primary structure comprises 67 residues: Cysteine-rich venom protein bucarin (67 aa).

An SCP domain is found at 13–58; the sequence is VDKHNALRRSVRPTARNMLQMEWNSNAAQNAKRFADRCTFAHSPPH.

Belongs to the CRISP family. Post-translationally, contains 8 disulfide bonds. In terms of tissue distribution, expressed by the venom gland.

Its subcellular location is the secreted. In terms of biological role, blocks contraction of smooth muscle elicited by high potassium-induced depolarization, but does not block caffeine-stimulated contraction. May target voltage-gated calcium channels on smooth muscle. The chain is Cysteine-rich venom protein bucarin from Bungarus candidus (Malayan krait).